The chain runs to 283 residues: V-set domain containing T-cell activation inhibitor 1 (283 aa).

The signal sequence occupies residues Met1 to Ala24. 2 Ig-like V-type domains span residues His35–Glu144 and Pro153–Thr241. 2 cysteine pairs are disulfide-bonded: Cys56–Cys130 and Cys168–Cys225. An N-linked (GlcNAc...) asparagine glycan is attached at Asn216. The GPI-anchor amidated glycine moiety is linked to residue Gly257. Positions Pro258–Arg283 are cleaved as a propeptide — removed in mature form.

The protein belongs to the immunoglobulin superfamily. BTN/MOG family. In terms of processing, N-glycosylated. Expressed on the surface of professional antigen-presenting cells (at protein level). Widely expressed, including in kidney, liver, lung, pancreas, placenta, prostate, spleen, testis and thymus.

It localises to the cell membrane. Its function is as follows. Negatively regulates T-cell-mediated immune response by inhibiting T-cell activation, proliferation, cytokine production and development of cytotoxicity. When expressed on the cell surface of tumor macrophages, plays an important role, together with regulatory T-cells (Treg), in the suppression of tumor-associated antigen-specific T-cell immunity. Involved in promoting epithelial cell transformation. The polypeptide is V-set domain containing T-cell activation inhibitor 1 (Mus musculus (Mouse)).